Consider the following 326-residue polypeptide: Beta-ketoacyl-[acyl-carrier-protein] synthase III (326 aa).

Active-site residues include Cys-112 and His-251. The ACP-binding stretch occupies residues 252-256 (QANSR). Asn-281 is an active-site residue.

Belongs to the thiolase-like superfamily. FabH family. Homodimer.

The protein resides in the cytoplasm. The enzyme catalyses malonyl-[ACP] + acetyl-CoA + H(+) = 3-oxobutanoyl-[ACP] + CO2 + CoA. It functions in the pathway lipid metabolism; fatty acid biosynthesis. Its function is as follows. Catalyzes the condensation reaction of fatty acid synthesis by the addition to an acyl acceptor of two carbons from malonyl-ACP. Catalyzes the first condensation reaction which initiates fatty acid synthesis and may therefore play a role in governing the total rate of fatty acid production. Possesses both acetoacetyl-ACP synthase and acetyl transacylase activities. Its substrate specificity determines the biosynthesis of branched-chain and/or straight-chain of fatty acids. The chain is Beta-ketoacyl-[acyl-carrier-protein] synthase III from Clostridium botulinum (strain ATCC 19397 / Type A).